The primary structure comprises 74 residues: Putative membrane protein insertion efficiency factor (74 aa).

The protein belongs to the UPF0161 family.

It localises to the cell membrane. Could be involved in insertion of integral membrane proteins into the membrane. The sequence is that of Putative membrane protein insertion efficiency factor from Bacillus pumilus (strain SAFR-032).